Consider the following 427-residue polypeptide: Large ribosomal subunit protein uL4 (427 aa).

N-acetylalanine is present on A2. K14 carries the post-translational modification N6-acetyllysine. R97 bears the Omega-N-methylarginine mark. N6-acetyllysine is present on K106. K239 participates in a covalent cross-link: Glycyl lysine isopeptide (Lys-Gly) (interchain with G-Cter in SUMO2). K259 bears the N6-acetyllysine mark. T266 is modified (phosphothreonine). S290 and S295 each carry phosphoserine. At R300 the chain carries Citrulline. K327 is covalently cross-linked (Glycyl lysine isopeptide (Lys-Gly) (interchain with G-Cter in SUMO2)). N6-acetyllysine occurs at positions 333 and 353. The residue at position 364 (K364) is an N6-acetyllysine; alternate. Residue K364 forms a Glycyl lysine isopeptide (Lys-Gly) (interchain with G-Cter in SUMO1); alternate linkage. S365 carries the post-translational modification Phosphoserine. The disordered stretch occupies residues 369–427 (AAVAGKKPVVGKKGKKVAVGVKKQKKPLVGKKAAATKKPAPEKKSTEKKPTTEEKKPAA). Residues 377-397 (VVGKKGKKVAVGVKKQKKPLV) show a composition bias toward basic residues. The segment covering 407 to 427 (PAPEKKSTEKKPTTEEKKPAA) has biased composition (basic and acidic residues).

This sequence belongs to the universal ribosomal protein uL4 family. As to quaternary structure, component of the large ribosomal subunit. May bind IPO9 with low affinity. Interacts with RBM3. Post-translationally, citrullinated by PADI4.

The protein resides in the cytoplasm. Its function is as follows. Component of the large ribosomal subunit. The ribosome is a large ribonucleoprotein complex responsible for the synthesis of proteins in the cell. This chain is Large ribosomal subunit protein uL4 (RPL4), found in Macaca fascicularis (Crab-eating macaque).